A 350-amino-acid chain; its full sequence is Blue-sensitive opsin (350 aa).

Topologically, residues 1–36 are extracellular; sequence MNGTEGPNFYVPMSNATGVVRSPFEYPQYYLAEPWA. N-linked (GlcNAc...) asparagine glycans are attached at residues Asn-2 and Asn-15. The helical transmembrane segment at 37–61 threads the bilayer; that stretch reads FSILAAYMFFLIITGFPINFLTLYV. Topologically, residues 62–73 are cytoplasmic; sequence TIEHKKLRTPLN. A helical transmembrane segment spans residues 74 to 98; it reads YILLNLAVADLFMVFGGFTTTMYTS. Topologically, residues 99–113 are extracellular; the sequence is MHGYFVFGETGCNLE. The cysteines at positions 110 and 187 are disulfide-linked. A helical transmembrane segment spans residues 114–133; that stretch reads GYFATLGGEISLWSLVVLAI. The Cytoplasmic portion of the chain corresponds to 134 to 152; it reads ERWVVVCKPISNFRFGENH. Residues 153–176 form a helical membrane-spanning segment; that stretch reads AIMGLTLTWVMANACAMPPLFGWS. Topologically, residues 177-202 are extracellular; it reads RYIPEGLQCSCGIDYYTLKPEVNNES. A glycan (N-linked (GlcNAc...) asparagine) is linked at Asn-200. A helical transmembrane segment spans residues 203-230; sequence FVIYMFLVHFTIPLTIISFCYGRLVCAV. The Cytoplasmic portion of the chain corresponds to 231–252; sequence KEAAAQQQESETTQRAEREVTR. A helical membrane pass occupies residues 253–276; it reads MVVIMVISFLVCWIPYASVAWYIF. The Extracellular portion of the chain corresponds to 277–284; it reads THQGSTFG. A helical transmembrane segment spans residues 285-309; it reads PIFMTVPSFFAKSSSIYNPMIYICM. Residue Lys-296 is modified to N6-(retinylidene)lysine. Topologically, residues 310-350 are cytoplasmic; the sequence is NKQFRNCMITTLFCGKNPFEGEEEGSTTKTEASAVSSVSPA. Residues 330–350 form a disordered region; it reads GEEEGSTTKTEASAVSSVSPA.

It belongs to the G-protein coupled receptor 1 family. Opsin subfamily. Post-translationally, phosphorylated on some or all of the serine and threonine residues present in the C-terminal region. As to expression, rod shaped photoreceptor cells which mediates vision in dim light.

The protein resides in the membrane. In terms of biological role, visual pigments are the light-absorbing molecules that mediate vision. They consist of an apoprotein, opsin, covalently linked to cis-retinal. This chain is Blue-sensitive opsin, found in Conger conger (Conger eel).